The sequence spans 188 residues: Adenylate kinase (188 aa).

10–15 lines the ATP pocket; the sequence is GCGKGT. An NMP region spans residues 30–59; the sequence is STGDMLRHARAAGTELGRRVAAIMDGGNLV. Residues T31, R36, 57-59, 85-88, and Q92 contribute to the AMP site; these read NLV and GFPR. The interval 126-136 is LID; that stretch reads KRAEEEGRPDD. ATP is bound at residue R127. Residues R133 and R144 each coordinate AMP. G172 is an ATP binding site.

It belongs to the adenylate kinase family. As to quaternary structure, monomer.

Its subcellular location is the cytoplasm. The catalysed reaction is AMP + ATP = 2 ADP. Its pathway is purine metabolism; AMP biosynthesis via salvage pathway; AMP from ADP: step 1/1. Functionally, catalyzes the reversible transfer of the terminal phosphate group between ATP and AMP. Plays an important role in cellular energy homeostasis and in adenine nucleotide metabolism. This Maricaulis maris (strain MCS10) (Caulobacter maris) protein is Adenylate kinase.